We begin with the raw amino-acid sequence, 245 residues long: 5'-nucleotidase SurE (245 aa).

A divalent metal cation is bound by residues aspartate 8, aspartate 9, serine 39, and asparagine 97.

Belongs to the SurE nucleotidase family. Requires a divalent metal cation as cofactor.

Its subcellular location is the cytoplasm. It catalyses the reaction a ribonucleoside 5'-phosphate + H2O = a ribonucleoside + phosphate. Its function is as follows. Nucleotidase that shows phosphatase activity on nucleoside 5'-monophosphates. This Clostridium kluyveri (strain NBRC 12016) protein is 5'-nucleotidase SurE.